We begin with the raw amino-acid sequence, 414 residues long: Transcription factor FAMA (414 aa).

Disordered stretches follow at residues Met1–Asp61 and Lys142–Met197. 2 stretches are compositionally biased toward low complexity: residues Gly12–Gly24 and Gln35–Gln49. The segment covering Arg166–Glu175 has biased composition (basic and acidic residues). Residues Val176 to Thr185 are compositionally biased toward basic residues. Residues Lys187–Met197 show a composition bias toward basic and acidic residues. Positions Ser194–Leu245 constitute a bHLH domain. The LxCxE motif signature appears at Leu249–Glu253.

Interacts with FAMA through its LxCxE motif. Self-interacts. Also interacts with bHLH071 and bHLH093. Interacts with RBR1. In terms of tissue distribution, resctricted to stomatal cell lineages (at protein level). Expressed in roots, leaves, stems, and flowers.

Its subcellular location is the nucleus. Its function is as follows. Transcription activator. Together with MYB88 and MYB124, ensures that stomata contain just two guard cells (GCs) by enforcing a single symmetric precursor cell division before stomatal maturity. Together with SPCH and MUTE, regulates the stomata formation. Required to promote differentiation and morphogenesis of stomatal guard cells and to halt proliferative divisions in their immediate precursors. Mediates the formation of stomata. Prevents histone H3K27me3 marks and derepresses stem cell gene expression. The protein is Transcription factor FAMA (FAMA) of Arabidopsis thaliana (Mouse-ear cress).